The sequence spans 201 residues: MQGTVESQGTAIAVDHAHEHPDFRVLGLLVFLISESLMFGGLFAAYLLLRGMHEQWPPEGTEVELFVPTINTLILISSSFVIHYGDVAIKKDDVRGMRKWYWITAAMGAVFLGGQVYEYLTLGYGLRTNVFANCFYVMTGFHGLHVFIGILLILGVIWRSRRPGHYNAQKHTGVAMAEIYWHFVDVIWIILFTLLYILTRF.

Helical transmembrane passes span 25-45, 65-85, 100-120, and 137-157; these read VLGL…LFAA, LFVP…IHYG, WYWI…YEYL, and VMTG…LGVI.

Belongs to the cytochrome c oxidase subunit 3 family.

The protein localises to the cell membrane. The catalysed reaction is 4 Fe(II)-[cytochrome c] + O2 + 8 H(+)(in) = 4 Fe(III)-[cytochrome c] + 2 H2O + 4 H(+)(out). This is Cytochrome c oxidase subunit 3 (ctaE) from Thermostichus vulcanus (Synechococcus vulcanus).